The primary structure comprises 397 residues: Putative gustatory receptor 93c (397 aa).

The Cytoplasmic portion of the chain corresponds to 1 to 12 (MIERLKKVSLPA). A helical transmembrane segment spans residues 13–33 (LSAFILFCSCHYGRILGVICF). The Extracellular portion of the chain corresponds to 34 to 87 (DIGQRTSDDSLVVRNRHQFKWFCLSCRLISVTAVCCFCAPYVADIEDPYERLLQ). Residues 88 to 108 (CFRLSASLICGICIIVVQVCY) traverse the membrane as a helical segment. The Cytoplasmic portion of the chain corresponds to 109 to 141 (EKELLRMIISFLRLFRRVRRLSSLKRIGFGGKR). Residues 142 to 162 (EFFLLLFKFICLVYELYSEIC) form a helical membrane-spanning segment. Over 163 to 179 (QLWHLPDSLSLFATLCE) the chain is Extracellular. Residues 180–200 (IFLEIGSLMIIHIGFVGYLSV) traverse the membrane as a helical segment. At 201–266 (AALYSEVNSF…RTFHRLLELP (66 aa)) the chain is on the cytoplasmic side. A helical membrane pass occupies residues 267–287 (VLIILLGKIFATTILSYEVII). Residues 288-295 (RPELYARK) are Extracellular-facing. A helical membrane pass occupies residues 296–316 (IGMWGLVVKSFADVILLTLAV). Residues 317 to 371 (HEAVSSSRMMRRLSLENFPITDHKAWHMKWEMFLSRLNFFEFRVRPLGLFEVSNE) lie on the Cytoplasmic side of the membrane. A helical transmembrane segment spans residues 372–392 (VILLFLSSMITYFTYVVQYGI). The Extracellular portion of the chain corresponds to 393 to 397 (QTNRL).

The protein belongs to the insect chemoreceptor superfamily. Gustatory receptor (GR) family. Gr93a subfamily. In larvae, is expressed in neurons of the posterior pharyngeal sense organ.

The protein localises to the cell membrane. Its function is as follows. Probable gustatory receptor which mediates acceptance or avoidance behavior, depending on its substrates. The chain is Putative gustatory receptor 93c (Gr93c) from Drosophila melanogaster (Fruit fly).